The primary structure comprises 156 residues: Small ribosomal subunit protein uS7 (156 aa).

The protein belongs to the universal ribosomal protein uS7 family. As to quaternary structure, part of the 30S ribosomal subunit. Contacts proteins S9 and S11.

In terms of biological role, one of the primary rRNA binding proteins, it binds directly to 16S rRNA where it nucleates assembly of the head domain of the 30S subunit. Is located at the subunit interface close to the decoding center, probably blocks exit of the E-site tRNA. The chain is Small ribosomal subunit protein uS7 from Streptococcus equi subsp. equi (strain 4047).